The sequence spans 234 residues: PHD finger protein ING1 (234 aa).

The tract at residues 129 to 166 is disordered; the sequence is NNGKAGNAGEGGRGGRKKTRLATAASTAAASTGMTSSN. The segment covering 149 to 165 has biased composition (low complexity); sequence LATAASTAAASTGMTSS. The PHD-type zinc finger occupies 178-227; it reads PTYCICNQVSFGEMVACDNNACKIEWFHFGCVGLKEQPKGKWYCPECATV. 8 residues coordinate Zn(2+): Cys-181, Cys-183, Cys-194, Cys-199, His-205, Cys-208, Cys-221, and Cys-224.

Belongs to the ING family. As to quaternary structure, interacts with H3K4me3 and to a lesser extent with H3K4me2. Ubiquitously expressed.

It is found in the nucleus. Functionally, histone-binding component that specifically recognizes H3 tails trimethylated on 'Lys-4' (H3K4me3), which mark transcription start sites of virtually all active genes. The polypeptide is PHD finger protein ING1 (ING1) (Arabidopsis thaliana (Mouse-ear cress)).